The primary structure comprises 536 residues: Nucleosome assembly protein 1-like 3 (536 aa).

2 disordered regions span residues 1–104 (MAEA…DKLP) and 160–338 (PTEE…KEDP). Positions 35-75 (SNSSSSTTSCGSTGSSSSSSSSSSSSSSSSSGSSGSSSNGS) are enriched in low complexity. Over residues 77–95 (LHQKKRVPGPSRRAQRRPS) the composition is skewed to basic residues. Over residues 160-184 (PTEEECEWNSEEEFSGDEEMQDDTP) the composition is skewed to acidic residues. 2 stretches are compositionally biased toward basic and acidic residues: residues 199 to 220 (GKENTEVKEEVKDVPEEVPEAK) and 227 to 269 (PKET…KTDS). Polar residues predominate over residues 287–300 (TQANAEYTDQPTED). A compositionally biased stretch (basic and acidic residues) spans 306–324 (PVREAQKRVPETRPEERVN).

The protein belongs to the nucleosome assembly protein (NAP) family.

The protein resides in the nucleus. This chain is Nucleosome assembly protein 1-like 3 (Nap1l3), found in Rattus norvegicus (Rat).